We begin with the raw amino-acid sequence, 568 residues long: Zinc finger protein 76 (568 aa).

K24 is covalently cross-linked (Glycyl lysine isopeptide (Lys-Gly) (interchain with G-Cter in SUMO2)). Repeat copies occupy residues 34–45 (IQLEDGTTAYIH), 62–73 (VQLEDGSMAYIH), and 88–99 (VQLEDGSTAYIH). A 3 X 12 AA approximate repeats region spans residues 34–99 (IQLEDGTTAY…LEDGSTAYIH (66 aa)). 7 consecutive C2H2-type zinc fingers follow at residues 165-189 (FRCG…ERAH), 195-219 (YRCD…VRTH), 225-249 (YKCP…VRTH), 255-279 (FRCP…VRTH), 285-309 (YTCP…VRIH), 315-339 (YVCT…HVVH), and 345-368 (YTCS…RSAH). Residues 365–401 (RSAHGELEATEESEQALYEQQQLEAASAAEESPSPKP) form a disordered region. A compositionally biased stretch (low complexity) spans 379 to 396 (QALYEQQQLEAASAAEES).

The protein belongs to the krueppel C2H2-type zinc-finger protein family.

Its subcellular location is the nucleus. Its function is as follows. May be involved in transcriptional regulation. This Rattus norvegicus (Rat) protein is Zinc finger protein 76 (Znf76).